The following is a 531-amino-acid chain: MGCFSSKHRKTQNDGGEKSIPINPVQTHVVPEHRKPQTPTPKPMTQPIHQQISTPSSNPVSVRDPDTILGKPFEDIRKFYSLGKELGRGQFGITYMCKEIGTGNTYACKSILKRKLISKQDKEDVKREIQIMQYLSGQPNIVEIKGAYEDRQSIHLVMELCAGGELFDRIIAQGHYSERAAAGIIRSIVNVVQICHFMGVVHRDLKPENFLLSSKEENAMLKATDFGLSVFIEEGKVYRDIVGSAYYVAPEVLRRSYGKEIDIWSAGVILYILLSGVPPFWAENEKGIFDEVIKGEIDFVSEPWPSISESAKDLVRKMLTKDPKRRITAAQVLEHPWIKGGEAPDKPIDSAVLSRMKQFRAMNKLKKLALKVIAESLSEEEIKGLKTMFANIDTDKSGTITYEELKTGLTRLGSRLSETEVKQLMEAADVDGNGTIDYYEFISATMHRYKLDRDEHVYKAFQHFDKDNSGHITRDELESAMKEYGMGDEASIKEVISEVDTDNDGRINFEEFCAMMRSGSTQPQGKLLPFH.

A compositionally biased stretch (basic residues) spans 1 to 10; it reads MGCFSSKHRK. The tract at residues 1-62 is disordered; it reads MGCFSSKHRK…STPSSNPVSV (62 aa). The N-myristoyl glycine moiety is linked to residue Gly2. A compositionally biased stretch (polar residues) spans 48 to 60; the sequence is IHQQISTPSSNPV. The 259-residue stretch at 80-338 folds into the Protein kinase domain; that stretch reads YSLGKELGRG…AAQVLEHPWI (259 aa). ATP is bound by residues 86-94 and Lys109; that span reads LGRGQFGIT. Asp204 acts as the Proton acceptor in catalysis. At Ser244 the chain carries Phosphoserine. The autoinhibitory domain stretch occupies residues 343–373; sequence APDKPIDSAVLSRMKQFRAMNKLKKLALKVI. EF-hand domains lie at 380–415, 416–451, 452–487, and 488–522; these read EEIK…LGSR, LSET…RYKL, DRDE…YGMG, and DEAS…GSTQ. 20 residues coordinate Ca(2+): Asp393, Asp395, Ser397, Thr399, Glu404, Asp429, Asp431, Asn433, Thr435, Glu440, Asp465, Asp467, Ser469, His471, Glu476, Asp500, Asp502, Asp504, Arg506, and Glu511.

The protein belongs to the protein kinase superfamily. Ser/Thr protein kinase family. CDPK subfamily. As to quaternary structure, interacts with SLAC1 and ABI1.

It is found in the cell membrane. The catalysed reaction is L-seryl-[protein] + ATP = O-phospho-L-seryl-[protein] + ADP + H(+). It carries out the reaction L-threonyl-[protein] + ATP = O-phospho-L-threonyl-[protein] + ADP + H(+). Activated by calcium. Autophosphorylation may play an important role in the regulation of the kinase activity. Its function is as follows. May play a role in signal transduction pathways that involve calcium as a second messenger. Mediates the phosphorylation and activation of the S-type anion efflux channel SLAC1. This chain is Calcium-dependent protein kinase 21 (CPK21), found in Arabidopsis thaliana (Mouse-ear cress).